The sequence spans 293 residues: Elongation factor Ts (293 aa).

Positions 80–83 are involved in Mg(2+) ion dislocation from EF-Tu; the sequence is TDFV.

This sequence belongs to the EF-Ts family.

It is found in the cytoplasm. Functionally, associates with the EF-Tu.GDP complex and induces the exchange of GDP to GTP. It remains bound to the aminoacyl-tRNA.EF-Tu.GTP complex up to the GTP hydrolysis stage on the ribosome. The chain is Elongation factor Ts from Janthinobacterium sp. (strain Marseille) (Minibacterium massiliensis).